The sequence spans 312 residues: Very-long-chain 3-oxoacyl-CoA reductase (312 aa).

Residues alanine 4–leucine 24 traverse the membrane as a helical segment. An NADP(+)-binding site is contributed by glycine 50–leucine 79. 2 helical membrane-spanning segments follow: residues glycine 182 to tyrosine 202 and glycine 271 to leucine 291. Residue serine 189 participates in substrate binding. The active-site Proton acceptor is tyrosine 202. Residues lysine 308 to asparagine 312 carry the Di-lysine motif motif.

The protein belongs to the short-chain dehydrogenases/reductases (SDR) family. 17-beta-HSD 3 subfamily.

The protein localises to the endoplasmic reticulum membrane. The catalysed reaction is a very-long-chain (3R)-3-hydroxyacyl-CoA + NADP(+) = a very-long-chain 3-oxoacyl-CoA + NADPH + H(+). The enzyme catalyses 17beta-estradiol + NAD(+) = estrone + NADH + H(+). It carries out the reaction 17beta-estradiol + NADP(+) = estrone + NADPH + H(+). It catalyses the reaction 3-oxooctadecanoyl-CoA + NADPH + H(+) = (3R)-hydroxyoctadecanoyl-CoA + NADP(+). The catalysed reaction is (7Z,10Z,13Z,16Z)-3-oxodocosatetraenoyl-CoA + NADPH + H(+) = (3R)-hydroxy-(7Z,10Z,13Z,16Z)-docosatetraenoyl-CoA + NADP(+). The enzyme catalyses 3-oxo-(7Z,10Z,13Z,16Z,19Z)-docosapentaenoyl-CoA + NADPH + H(+) = (3R)-hydroxy-(7Z,10Z,13Z,16Z,19Z)-docosapentaenoyl-CoA + NADP(+). It carries out the reaction (8Z,11Z,14Z)-3-oxoeicosatrienoyl-CoA + NADPH + H(+) = (3R)-hydroxy-(8Z,11Z,14Z)-eicosatrienoyl-CoA + NADP(+). Its pathway is lipid metabolism; fatty acid biosynthesis. It participates in steroid biosynthesis; estrogen biosynthesis. Its function is as follows. Catalyzes the second of the four reactions of the long-chain fatty acids elongation cycle. This endoplasmic reticulum-bound enzymatic process, allows the addition of two carbons to the chain of long- and very long-chain fatty acids/VLCFAs per cycle. This enzyme has a 3-ketoacyl-CoA reductase activity, reducing 3-ketoacyl-CoA to 3-hydroxyacyl-CoA, within each cycle of fatty acid elongation. Thereby, it may participate in the production of VLCFAs of different chain lengths that are involved in multiple biological processes as precursors of membrane lipids and lipid mediators. May also catalyze the transformation of estrone (E1) into estradiol (E2) and play a role in estrogen formation. In Macaca fascicularis (Crab-eating macaque), this protein is Very-long-chain 3-oxoacyl-CoA reductase (HSD17B12).